Here is a 369-residue protein sequence, read N- to C-terminus: RING-H2 finger protein ATL47 (369 aa).

The helical transmembrane segment at 52–72 threads the bilayer; that stretch reads IILFIIVLLSVIFFICSILHL. The RING-type; atypical zinc-finger motif lies at 144 to 186; that stretch reads CAVCLCEFSEDDKLRLLPNCSHAFHIDCIDTWLLSNSTCPLCR. The tract at residues 332-355 is disordered; that stretch reads NNHPSETNLVVGGSSSSSSYVCSG. The segment covering 341–355 has biased composition (low complexity); it reads VVGGSSSSSSYVCSG.

It belongs to the RING-type zinc finger family. ATL subfamily.

It localises to the membrane. The enzyme catalyses S-ubiquitinyl-[E2 ubiquitin-conjugating enzyme]-L-cysteine + [acceptor protein]-L-lysine = [E2 ubiquitin-conjugating enzyme]-L-cysteine + N(6)-ubiquitinyl-[acceptor protein]-L-lysine.. Its pathway is protein modification; protein ubiquitination. This chain is RING-H2 finger protein ATL47 (ATL47), found in Arabidopsis thaliana (Mouse-ear cress).